Consider the following 105-residue polypeptide: MSYKIRSNDLVIVLTGKDKGKVGIVKKIYRSNNTVIVEGINIVKKHQKSIPEKQQSGGIISKELPIHISNVSIFNKKLKKSDKVEFFWHLGKKKRRFKSNKELIQ.

It belongs to the universal ribosomal protein uL24 family. In terms of assembly, part of the 50S ribosomal subunit.

In terms of biological role, one of two assembly initiator proteins, it binds directly to the 5'-end of the 23S rRNA, where it nucleates assembly of the 50S subunit. Functionally, one of the proteins that surrounds the polypeptide exit tunnel on the outside of the subunit. This chain is Large ribosomal subunit protein uL24, found in Buchnera aphidicola subsp. Cinara cedri (strain Cc).